Here is a 597-residue protein sequence, read N- to C-terminus: Zinc finger CCCH domain-containing protein 29 (597 aa).

ANK repeat units lie at residues 76 to 106 and 111 to 143; these read EERT…DVNR and EKVT…SPNC. C3H1-type zinc fingers lie at residues 254–281 and 289–313; these read PYTC…HGVF and QYRT…HRRD. A compositionally biased stretch (polar residues) spans 320–337; that stretch reads ASTGSAMVSPRSSNQSPE. The disordered stretch occupies residues 320-341; sequence ASTGSAMVSPRSSNQSPEMSVM.

As to expression, expressed in roots and anthers.

Its subcellular location is the nucleus. Functionally, involved in salt stress response. May positively modulate plant tolerance to salt stress. The protein is Zinc finger CCCH domain-containing protein 29 of Arabidopsis thaliana (Mouse-ear cress).